Reading from the N-terminus, the 217-residue chain is Pyridoxine/pyridoxamine 5'-phosphate oxidase (217 aa).

Residues 13-16 and lysine 71 contribute to the substrate site; that span reads RREY. FMN is bound by residues 66–71, 81–82, arginine 87, lysine 88, and glutamine 110; these read RIVLLK and YT. 3 residues coordinate substrate: tyrosine 128, arginine 132, and serine 136. FMN contacts are provided by residues 145–146 and tryptophan 190; that span reads QS. Substrate is bound at residue 196 to 198; that stretch reads RLH. Arginine 200 contacts FMN.

Belongs to the pyridoxamine 5'-phosphate oxidase family. In terms of assembly, homodimer. FMN is required as a cofactor.

It carries out the reaction pyridoxamine 5'-phosphate + O2 + H2O = pyridoxal 5'-phosphate + H2O2 + NH4(+). It catalyses the reaction pyridoxine 5'-phosphate + O2 = pyridoxal 5'-phosphate + H2O2. It participates in cofactor metabolism; pyridoxal 5'-phosphate salvage; pyridoxal 5'-phosphate from pyridoxamine 5'-phosphate: step 1/1. It functions in the pathway cofactor metabolism; pyridoxal 5'-phosphate salvage; pyridoxal 5'-phosphate from pyridoxine 5'-phosphate: step 1/1. Functionally, catalyzes the oxidation of either pyridoxine 5'-phosphate (PNP) or pyridoxamine 5'-phosphate (PMP) into pyridoxal 5'-phosphate (PLP). The polypeptide is Pyridoxine/pyridoxamine 5'-phosphate oxidase (Yersinia enterocolitica serotype O:8 / biotype 1B (strain NCTC 13174 / 8081)).